A 150-amino-acid chain; its full sequence is Large ribosomal subunit protein bL9 (150 aa).

This sequence belongs to the bacterial ribosomal protein bL9 family.

Binds to the 23S rRNA. The sequence is that of Large ribosomal subunit protein bL9 from Shewanella piezotolerans (strain WP3 / JCM 13877).